A 28-amino-acid polypeptide reads, in one-letter code: GSLCGDTCFVLGCNDSSCSCNYPICVKD.

The segment at residues 1 to 28 (GSLCGDTCFVLGCNDSSCSCNYPICVKD) is a cross-link (cyclopeptide (Gly-Asp)). Cystine bridges form between cysteine 4-cysteine 18, cysteine 8-cysteine 20, and cysteine 13-cysteine 25.

In terms of processing, this is a cyclic peptide.

Functionally, probably participates in a plant defense mechanism. This is Kalata-B12 from Oldenlandia affinis.